The primary structure comprises 424 residues: Proline--tRNA ligase (424 aa).

Belongs to the class-II aminoacyl-tRNA synthetase family. ProS type 2 subfamily. Homodimer.

It is found in the cytoplasm. It carries out the reaction tRNA(Pro) + L-proline + ATP = L-prolyl-tRNA(Pro) + AMP + diphosphate. In terms of biological role, catalyzes the attachment of proline to tRNA(Pro) in a two-step reaction: proline is first activated by ATP to form Pro-AMP and then transferred to the acceptor end of tRNA(Pro). The protein is Proline--tRNA ligase of Ehrlichia canis (strain Jake).